Here is a 57-residue protein sequence, read N- to C-terminus: Ribulose bisphosphate carboxylase large chain (57 aa).

A propeptide spanning residues 1 to 2 is cleaved from the precursor; it reads MS. Position 3 is an N-acetylproline (proline 3). An N6,N6,N6-trimethyllysine modification is found at lysine 14.

This sequence belongs to the RuBisCO large chain family. Type I subfamily. As to quaternary structure, heterohexadecamer of 8 large chains and 8 small chains.

Its subcellular location is the plastid. The protein resides in the chloroplast. The enzyme catalyses 2 (2R)-3-phosphoglycerate + 2 H(+) = D-ribulose 1,5-bisphosphate + CO2 + H2O. It catalyses the reaction D-ribulose 1,5-bisphosphate + O2 = 2-phosphoglycolate + (2R)-3-phosphoglycerate + 2 H(+). Functionally, ruBisCO catalyzes two reactions: the carboxylation of D-ribulose 1,5-bisphosphate, the primary event in carbon dioxide fixation, as well as the oxidative fragmentation of the pentose substrate in the photorespiration process. Both reactions occur simultaneously and in competition at the same active site. The sequence is that of Ribulose bisphosphate carboxylase large chain (rbcL) from Buxus sempervirens (Common box).